Here is a 644-residue protein sequence, read N- to C-terminus: Macrolide export ATP-binding/permease protein MacB (644 aa).

Positions 4–242 constitute an ABC transporter domain; the sequence is IECKNINRYF…SNVGRIQEKA (239 aa). 40-47 lines the ATP pocket; it reads GQSGSGKS. Helical transmembrane passes span 270 to 290, 524 to 544, 574 to 594, and 607 to 627; these read LLTM…VALG, IALI…LVSV, LICV…SLVF, and AMSV…FGFM.

It belongs to the ABC transporter superfamily. Macrolide exporter (TC 3.A.1.122) family. Homodimer.

Its subcellular location is the cell inner membrane. In terms of biological role, non-canonical ABC transporter that contains transmembrane domains (TMD), which form a pore in the inner membrane, and an ATP-binding domain (NBD), which is responsible for energy generation. Confers resistance against macrolides. The chain is Macrolide export ATP-binding/permease protein MacB from Neisseria meningitidis serogroup A / serotype 4A (strain DSM 15465 / Z2491).